Here is a 344-residue protein sequence, read N- to C-terminus: MILKRVTEALEAYKNGEMLIVMDDEDRENEGDLVLAGIFSTPEKINFMATHARGLICVSLTKDLAKKFELPPMVSVNDSNHETAFTVSIDAKEARTGISAFERHLTIELLCKDTTKPSDFVRPGHIFPLIAKDGGVLARTGHTEASVDLCKLAGLKPVSVICEIMKEDGSMARRGDKFLSDFALKHNLKTLYVSDLISYRLENESLLKMFCQEEREFLKHQTQCYTFLDHQQKNHYAFKFKGAKTHDLAPLVRFHPIKEDFDFLTTDAFEVFFKALEYLKHEGGYLIFMNTHSKENNVVKDFGIGALVLKNLGIKDFRLLSSCEDRQYKALSGFGLKLVETISL.

Residues 1–202 (MILKRVTEAL…VSDLISYRLE (202 aa)) are DHBP synthase. D-ribulose 5-phosphate is bound by residues 27 to 28 (RE), D32, 139 to 143 (RTGHT), and E163. E28 is a binding site for Mg(2+). A Mg(2+)-binding site is contributed by H142. Residues 203-344 (NESLLKMFCQ…GLKLVETISL (142 aa)) form a GTP cyclohydrolase II-like region.

This sequence in the N-terminal section; belongs to the DHBP synthase family. In the C-terminal section; belongs to the GTP cyclohydrolase II family. It depends on Mg(2+) as a cofactor. The cofactor is Mn(2+).

The catalysed reaction is D-ribulose 5-phosphate = (2S)-2-hydroxy-3-oxobutyl phosphate + formate + H(+). The protein operates within cofactor biosynthesis; riboflavin biosynthesis; 2-hydroxy-3-oxobutyl phosphate from D-ribulose 5-phosphate: step 1/1. Functionally, catalyzes the conversion of D-ribulose 5-phosphate to formate and 3,4-dihydroxy-2-butanone 4-phosphate. The chain is 3,4-dihydroxy-2-butanone 4-phosphate synthase (ribB) from Helicobacter pylori (strain ATCC 700392 / 26695) (Campylobacter pylori).